The chain runs to 443 residues: MERKRGREMNPPSADPPSATPVARANLPGSVAAAFHGRPCSQGTTTLKRVNERYKIVGFISSGTYGRVYKAEGKNGRTGEFAIKKFKPDKEGELQYSGISQSAIREMALCTELAHPNVVHTVEIILEEKCIFIVFEYAEHDLLQIIHHHNQPQRQAIPARTIKSILYQLLQGLVYLHRNWVMHRDLKPANIMVTSAGKVKIGDLGLARLFYKPLQSLFSGDKVVVTIWYRAPELLLGSRHYTPAVDLWAVGCIFAELLSLRPIFKGEEAKMDSKKTVPFQRNQMQKIVEIMGMPSKDRWPLLTAMPEYPQLSSLIAGNAARFARPQGGDGLDRWYNQTLINNQYPAGPGPETPGAEGLALLKQLLEYDPQKRLTAEKALEHRYFTEHGKPSDNCFEDSKIKYPVRRVSQEDNDIRTSSLPGTKRSGLPDDSLMGRPAKRLKEG.

The disordered stretch occupies residues 1-24 (MERKRGREMNPPSADPPSATPVAR). Residues 54-384 (YKIVGFISSG…AEKALEHRYF (331 aa)) form the Protein kinase domain. Residues 60 to 68 (ISSGTYGRV) and Lys84 each bind ATP. The active-site Proton acceptor is Asp185. The segment at 405-443 (RRVSQEDNDIRTSSLPGTKRSGLPDDSLMGRPAKRLKEG) is disordered.

This sequence belongs to the protein kinase superfamily. CMGC Ser/Thr protein kinase family. CDC2/CDKX subfamily. As to quaternary structure, component of the srb8-11 complex, a regulatory module of the Mediator complex. It depends on Mg(2+) as a cofactor.

It localises to the nucleus. It carries out the reaction L-seryl-[protein] + ATP = O-phospho-L-seryl-[protein] + ADP + H(+). The catalysed reaction is L-threonyl-[protein] + ATP = O-phospho-L-threonyl-[protein] + ADP + H(+). The enzyme catalyses [DNA-directed RNA polymerase] + ATP = phospho-[DNA-directed RNA polymerase] + ADP + H(+). In terms of biological role, component of the srb8-11 complex. The srb8-11 complex is a regulatory module of the Mediator complex which is itself dependent transcription. The srb8-11 complex may be involved in the transcriptional repression of a subset of genes regulated by Mediator. It may inhibit the association of the Mediator complex with RNA polymerase II to form the holoenzyme complex. The srb8-11 complex phosphorylates the C-terminal domain (CTD) of the largest subunit of RNA polymerase II. The chain is Serine/threonine-protein kinase SSN3 (SSN3) from Phaeosphaeria nodorum (strain SN15 / ATCC MYA-4574 / FGSC 10173) (Glume blotch fungus).